The primary structure comprises 563 residues: Zinc finger protein 503 (563 aa).

Positions 1–10 are enriched in polar residues; that stretch reads MITSPSASRN. Disordered stretches follow at residues 1–48 and 101–226; these read MITS…PLRQ and SQIG…TSVS. 2 stretches are compositionally biased toward low complexity: residues 19 to 33 and 112 to 122; these read SSSS…AVAS and SKLSSVTSNGS. Over residues 174–194 the composition is skewed to polar residues; the sequence is ATCQPFTPRTGSPNSSTSASP. Residues 199–211 show a composition bias toward basic and acidic residues; the sequence is GKGERDEKKDSDC. Residues 212–226 show a composition bias toward polar residues; sequence NKNCSSDGSAPTSVS. A C2H2-type zinc finger spans residues 431 to 459; sequence HVCNWVSANGPCDKRFSSSEELLNHLRTH.

Belongs to the Elbow/Noc family. Interacts with nlz1.

Its subcellular location is the nucleus. Required for segmental gene expression during hindbrain development. May function as a transcriptional repressor. The polypeptide is Zinc finger protein 503 (znf503) (Danio rerio (Zebrafish)).